The sequence spans 249 residues: DnaJ homolog subfamily C member 5 homolog (249 aa).

S12 carries the post-translational modification Phosphoserine. T13 carries the post-translational modification Phosphothreonine. Phosphoserine is present on residues S14 and S17. The 70-residue stretch at 15-84 folds into the J domain; the sequence is GDSLYEILGL…RNIYDNYGSL (70 aa). Y19 carries the post-translational modification Phosphotyrosine. A compositionally biased stretch (basic and acidic residues) spans 146–162; the sequence is HDQYSHLNRPDGNREGN. Disordered regions lie at residues 146–177 and 218–249; these read HDQYSHLNRPDGNREGNDMPTHLGQPPRLEDV and PFTGAPVAANENTSLNTTEQTTYTPDMVNQKY. A compositionally biased stretch (polar residues) spans 227–241; sequence NENTSLNTTEQTTYT.

Fatty acylated. Heavily palmitoylated in the cysteine string motif. Expressed in wide range of synaptic terminals: embryonic nervous system, larval neuromuscular junctions, adult visual system (neuropil of optic ganglia and terminal of R1-8 photoreceptors) and thoracic neuromuscular junctions. Also expressed in non-neuronal cells: follicle cells, spermatheca, testis and ejaculatory bulb. Low level of expression is found in many neuronal and non-neuronal tissues.

The protein localises to the membrane. Its function is as follows. May have an important role in presynaptic function. The protein is DnaJ homolog subfamily C member 5 homolog of Drosophila melanogaster (Fruit fly).